A 382-amino-acid polypeptide reads, in one-letter code: Carbamoyl phosphate synthase small chain (382 aa).

Residues 1–187 (MPTPALLVLA…EFRPQTATEE (187 aa)) form a CPSase region. The L-glutamine site is built by Ser47, Gly239, and Gly241. One can recognise a Glutamine amidotransferase type-1 domain in the interval 191-377 (TVVAIDFGVK…VAQMRAYRQQ (187 aa)). Cys267 (nucleophile) is an active-site residue. L-glutamine is bound by residues Leu268, Gln271, Asn307, Gly309, and Phe310. Catalysis depends on residues His350 and Glu352.

Belongs to the CarA family. In terms of assembly, composed of two chains; the small (or glutamine) chain promotes the hydrolysis of glutamine to ammonia, which is used by the large (or ammonia) chain to synthesize carbamoyl phosphate. Tetramer of heterodimers (alpha,beta)4.

It catalyses the reaction hydrogencarbonate + L-glutamine + 2 ATP + H2O = carbamoyl phosphate + L-glutamate + 2 ADP + phosphate + 2 H(+). The catalysed reaction is L-glutamine + H2O = L-glutamate + NH4(+). Its pathway is amino-acid biosynthesis; L-arginine biosynthesis; carbamoyl phosphate from bicarbonate: step 1/1. It participates in pyrimidine metabolism; UMP biosynthesis via de novo pathway; (S)-dihydroorotate from bicarbonate: step 1/3. In terms of biological role, small subunit of the glutamine-dependent carbamoyl phosphate synthetase (CPSase). CPSase catalyzes the formation of carbamoyl phosphate from the ammonia moiety of glutamine, carbonate, and phosphate donated by ATP, constituting the first step of 2 biosynthetic pathways, one leading to arginine and/or urea and the other to pyrimidine nucleotides. The small subunit (glutamine amidotransferase) binds and cleaves glutamine to supply the large subunit with the substrate ammonia. The polypeptide is Carbamoyl phosphate synthase small chain (Thermosynechococcus vestitus (strain NIES-2133 / IAM M-273 / BP-1)).